Here is an 84-residue protein sequence, read N- to C-terminus: Mu-conotoxin-like Cal 12.2d (84 aa).

The N-terminal stretch at 1–19 (MKLTCVLVVLLLVLPFGDL) is a signal peptide. A propeptide spanning residues 20-42 (ITTSNTEDNKRGATPWQNSLKAR) is cleaved from the precursor. At tryptophan 72 the chain carries 6'-bromotryptophan. A 4-hydroxyproline modification is found at proline 77. Residue tryptophan 81 is modified to 6'-bromotryptophan.

Belongs to the conotoxin O1 superfamily. In terms of processing, contains 4 disulfide bonds. As to expression, expressed by the venom duct.

Its subcellular location is the secreted. Mu-conotoxins block voltage-gated sodium channels. This toxin reversibly blocks voltage-gated sodium channel in cephalopods, with no alteration in the voltage dependence of sodium conductance or on the kinetics of inactivation. This chain is Mu-conotoxin-like Cal 12.2d, found in Californiconus californicus (California cone).